Consider the following 148-residue polypeptide: Nucleoside diphosphate kinase B (148 aa).

ATP-binding residues include lysine 9, phenylalanine 57, arginine 85, threonine 91, arginine 102, and asparagine 112. Histidine 115 (pros-phosphohistidine intermediate) is an active-site residue.

The protein belongs to the NDK family. Mg(2+) serves as cofactor.

It carries out the reaction a 2'-deoxyribonucleoside 5'-diphosphate + ATP = a 2'-deoxyribonucleoside 5'-triphosphate + ADP. The enzyme catalyses a ribonucleoside 5'-diphosphate + ATP = a ribonucleoside 5'-triphosphate + ADP. In terms of biological role, major role in the synthesis of nucleoside triphosphates other than ATP. The ATP gamma phosphate is transferred to the NDP beta phosphate via a ping-pong mechanism, using a phosphorylated active-site intermediate. The polypeptide is Nucleoside diphosphate kinase B (Flaveria bidentis (Coastal plain yellowtops)).